The primary structure comprises 338 residues: 1-aminocyclopropane-1-carboxylate deaminase (338 aa).

Residue Lys-51 is modified to N6-(pyridoxal phosphate)lysine. The active-site Nucleophile is the Ser-78.

The protein belongs to the ACC deaminase/D-cysteine desulfhydrase family. In terms of assembly, homotrimer. Requires pyridoxal 5'-phosphate as cofactor.

It carries out the reaction 1-aminocyclopropane-1-carboxylate + H2O = 2-oxobutanoate + NH4(+). Functionally, catalyzes a cyclopropane ring-opening reaction, the irreversible conversion of 1-aminocyclopropane-1-carboxylate (ACC) to ammonia and alpha-ketobutyrate. Allows growth on ACC as a nitrogen source. This chain is 1-aminocyclopropane-1-carboxylate deaminase, found in Pseudomonas putida (Arthrobacter siderocapsulatus).